The following is a 971-amino-acid chain: Valine--tRNA ligase (971 aa).

Positions proline 55–histidine 65 match the 'HIGH' region motif. The short motif at lysine 572–serine 576 is the 'KMSKS' region element. Lysine 575 is an ATP binding site. Positions lysine 906–glutamate 933 form a coiled coil.

It belongs to the class-I aminoacyl-tRNA synthetase family. ValS type 1 subfamily. Monomer.

It is found in the cytoplasm. It catalyses the reaction tRNA(Val) + L-valine + ATP = L-valyl-tRNA(Val) + AMP + diphosphate. Catalyzes the attachment of valine to tRNA(Val). As ValRS can inadvertently accommodate and process structurally similar amino acids such as threonine, to avoid such errors, it has a 'posttransfer' editing activity that hydrolyzes mischarged Thr-tRNA(Val) in a tRNA-dependent manner. This Acinetobacter baylyi (strain ATCC 33305 / BD413 / ADP1) protein is Valine--tRNA ligase.